A 162-amino-acid chain; its full sequence is Serine-protein kinase RsbW (162 aa).

It belongs to the anti-sigma-factor family.

It carries out the reaction L-seryl-[protein] + ATP = O-phospho-L-seryl-[protein] + ADP + H(+). The catalysed reaction is L-threonyl-[protein] + ATP = O-phospho-L-threonyl-[protein] + ADP + H(+). Its function is as follows. Negative regulator of sigma-B activity. Phosphorylates and inactivates its specific antagonist protein, RsbV. Upon phosphorylation of RsbV, RsbW is released and binds to sigma-B, thereby blocking its ability to form an RNA polymerase holoenzyme (E-sigma-B). This is Serine-protein kinase RsbW from Bacillus pumilus (strain SAFR-032).